Consider the following 337-residue polypeptide: Anthranilate phosphoribosyltransferase (337 aa).

Residues G82, G85 to D86, T90, N92 to T95, K110 to S118, and S122 each bind 5-phospho-alpha-D-ribose 1-diphosphate. G82 contributes to the anthranilate binding site. S94 provides a ligand contact to Mg(2+). Anthranilate is bound at residue R168. Mg(2+) contacts are provided by D226 and E227.

It belongs to the anthranilate phosphoribosyltransferase family. In terms of assembly, homodimer. The cofactor is Mg(2+).

The catalysed reaction is N-(5-phospho-beta-D-ribosyl)anthranilate + diphosphate = 5-phospho-alpha-D-ribose 1-diphosphate + anthranilate. The protein operates within amino-acid biosynthesis; L-tryptophan biosynthesis; L-tryptophan from chorismate: step 2/5. Functionally, catalyzes the transfer of the phosphoribosyl group of 5-phosphorylribose-1-pyrophosphate (PRPP) to anthranilate to yield N-(5'-phosphoribosyl)-anthranilate (PRA). The protein is Anthranilate phosphoribosyltransferase of Francisella tularensis subsp. tularensis (strain WY96-3418).